A 499-amino-acid chain; its full sequence is uncharacterized protein (499 aa).

This is an uncharacterized protein from Methanothermobacter thermautotrophicus (Methanobacterium thermoformicicum).